The chain runs to 250 residues: Uracil-DNA glycosylase (250 aa).

D78 functions as the Proton acceptor in the catalytic mechanism.

This sequence belongs to the uracil-DNA glycosylase (UDG) superfamily. UNG family.

The protein localises to the cytoplasm. It catalyses the reaction Hydrolyzes single-stranded DNA or mismatched double-stranded DNA and polynucleotides, releasing free uracil.. Excises uracil residues from the DNA which can arise as a result of misincorporation of dUMP residues by DNA polymerase or due to deamination of cytosine. The chain is Uracil-DNA glycosylase from Albidiferax ferrireducens (strain ATCC BAA-621 / DSM 15236 / T118) (Rhodoferax ferrireducens).